We begin with the raw amino-acid sequence, 292 residues long: Cytochrome c1, heme protein, mitochondrial (292 aa).

The transit peptide at 1–46 directs the protein to the mitochondrion; sequence MFRSFSTAAKQAVKGTYVQRAIVGGAAVVGIGASTMLYADSLTADA. Topologically, residues 47 to 253 are mitochondrial intermembrane; sequence MTAAEHGLHA…SEPEHDERKR (207 aa). One can recognise a Cytochrome c domain in the interval 73 to 226; it reads SSIRRGYQVY…DLVEYEDGTP (154 aa). Positions 86, 89, and 90 each coordinate heme c. The segment at 117 to 137 is disordered; the sequence is FEYDDEPDDQGNPKKRPGKLA. Met-210 serves as a coordination point for heme c. Residues 254 to 272 traverse the membrane as a helical segment; it reads LGLKAMIVLSSLYLLSVWV. Residues 273-292 lie on the Mitochondrial matrix side of the membrane; sequence KKFKWASIKSRKIVFNPPKK.

This sequence belongs to the cytochrome c family. As to quaternary structure, component of the ubiquinol-cytochrome c oxidoreductase (cytochrome b-c1 complex, complex III, CIII), a multisubunit enzyme composed of 3 respiratory subunits cytochrome b, cytochrome c1 and Rieske protein, 2 core protein subunits, and additional low-molecular weight protein subunits. The complex exists as an obligatory dimer and forms supercomplexes (SCs) in the inner mitochondrial membrane with cytochrome c oxidase (complex IV, CIV). Heme c is required as a cofactor.

The protein resides in the mitochondrion inner membrane. It carries out the reaction a quinol + 2 Fe(III)-[cytochrome c](out) = a quinone + 2 Fe(II)-[cytochrome c](out) + 2 H(+)(out). Component of the ubiquinol-cytochrome c oxidoreductase, a multisubunit transmembrane complex that is part of the mitochondrial electron transport chain which drives oxidative phosphorylation. The respiratory chain contains 3 multisubunit complexes succinate dehydrogenase (complex II, CII), ubiquinol-cytochrome c oxidoreductase (cytochrome b-c1 complex, complex III, CIII) and cytochrome c oxidase (complex IV, CIV), that cooperate to transfer electrons derived from NADH and succinate to molecular oxygen, creating an electrochemical gradient over the inner membrane that drives transmembrane transport and the ATP synthase. The cytochrome b-c1 complex catalyzes electron transfer from ubiquinol to cytochrome c, linking this redox reaction to translocation of protons across the mitochondrial inner membrane, with protons being carried across the membrane as hydrogens on the quinol. In the process called Q cycle, 2 protons are consumed from the matrix, 4 protons are released into the intermembrane space and 2 electrons are passed to cytochrome c. Cytochrome c1 is a catalytic core subunit containing a c-type heme. It transfers electrons from the [2Fe-2S] iron-sulfur cluster of the Rieske protein to cytochrome c. The polypeptide is Cytochrome c1, heme protein, mitochondrial (CYT1) (Kluyveromyces lactis (strain ATCC 8585 / CBS 2359 / DSM 70799 / NBRC 1267 / NRRL Y-1140 / WM37) (Yeast)).